We begin with the raw amino-acid sequence, 484 residues long: TPR repeat-containing protein YvcD (484 aa).

TPR repeat units follow at residues 21-54 (GQYF…EPED), 55-88 (SEML…LEAE), and 187-220 (WSAY…NEGN).

The polypeptide is TPR repeat-containing protein YvcD (yvcD) (Bacillus subtilis (strain 168)).